We begin with the raw amino-acid sequence, 363 residues long: Large ribosomal subunit protein uL4B (363 aa).

Residues 280–363 (PENIISNADV…EKFLSVLHEN (84 aa)) form a C-terminal-extended nuclear localization signal region.

This sequence belongs to the universal ribosomal protein uL4 family. Component of the large ribosomal subunit (LSU). Mature yeast ribosomes consist of a small (40S) and a large (60S) subunit. The 40S small subunit contains 1 molecule of ribosomal RNA (18S rRNA) and at least 33 different proteins. The large 60S subunit contains 3 rRNA molecules (25S, 5.8S and 5S rRNA) and at least 46 different proteins. uL4 is associated with the polypeptide exit tunnel. uL4 interacts with its chaperone ACL4 and the nuclear import receptor KAP104.

It localises to the cytoplasm. In terms of biological role, component of the ribosome, a large ribonucleoprotein complex responsible for the synthesis of proteins in the cell. The small ribosomal subunit (SSU) binds messenger RNAs (mRNAs) and translates the encoded message by selecting cognate aminoacyl-transfer RNA (tRNA) molecules. The large subunit (LSU) contains the ribosomal catalytic site termed the peptidyl transferase center (PTC), which catalyzes the formation of peptide bonds, thereby polymerizing the amino acids delivered by tRNAs into a polypeptide chain. The nascent polypeptides leave the ribosome through a tunnel in the LSU and interact with protein factors that function in enzymatic processing, targeting, and the membrane insertion of nascent chains at the exit of the ribosomal tunnel. The polypeptide is Large ribosomal subunit protein uL4B (rpl401) (Schizosaccharomyces pombe (strain 972 / ATCC 24843) (Fission yeast)).